We begin with the raw amino-acid sequence, 332 residues long: Leucine carboxyl methyltransferase 1 (332 aa).

S-adenosyl-L-methionine contacts are provided by residues Arg-71, Gly-96, Asp-120, 169–170 (DL), and Glu-196.

Belongs to the methyltransferase superfamily. LCMT family.

The enzyme catalyses [phosphatase 2A protein]-C-terminal L-leucine + S-adenosyl-L-methionine = [phosphatase 2A protein]-C-terminal L-leucine methyl ester + S-adenosyl-L-homocysteine. Methylates the carboxyl group of the C-terminal leucine residue of protein phosphatase 2A catalytic subunits to form alpha-leucine ester residues. The chain is Leucine carboxyl methyltransferase 1 (Lcmt1) from Rattus norvegicus (Rat).